Consider the following 65-residue polypeptide: Large ribosomal subunit protein bL32 (65 aa).

The protein belongs to the bacterial ribosomal protein bL32 family.

This is Large ribosomal subunit protein bL32 from Metamycoplasma arthritidis (strain 158L3-1) (Mycoplasma arthritidis).